We begin with the raw amino-acid sequence, 178 residues long: Large ribosomal subunit protein bL25 (178 aa).

Belongs to the bacterial ribosomal protein bL25 family. CTC subfamily. As to quaternary structure, part of the 50S ribosomal subunit; part of the 5S rRNA/L5/L18/L25 subcomplex. Contacts the 5S rRNA. Binds to the 5S rRNA independently of L5 and L18.

In terms of biological role, this is one of the proteins that binds to the 5S RNA in the ribosome where it forms part of the central protuberance. The chain is Large ribosomal subunit protein bL25 from Nitratiruptor sp. (strain SB155-2).